The chain runs to 212 residues: Large ribosomal subunit protein uL3 (212 aa).

The disordered stretch occupies residues 135–156 (MTHGNSRSHRVPGSIGQNQSPG). Glutamine 153 bears the N5-methylglutamine mark.

The protein belongs to the universal ribosomal protein uL3 family. In terms of assembly, part of the 50S ribosomal subunit. Forms a cluster with proteins L14 and L19. Post-translationally, methylated by PrmB.

Its function is as follows. One of the primary rRNA binding proteins, it binds directly near the 3'-end of the 23S rRNA, where it nucleates assembly of the 50S subunit. The polypeptide is Large ribosomal subunit protein uL3 (Tolumonas auensis (strain DSM 9187 / NBRC 110442 / TA 4)).